The sequence spans 478 residues: Trigger factor (478 aa).

The region spanning 162–243 (GDFVSIDLSA…VKSIKERELP (82 aa)) is the PPIase FKBP-type domain. Residues 424-478 (KDTDGNDIDTTEFFGPSGGAQAEAEGADEADADSDADSDTEADSDTEADEADEAK) are disordered. Positions 448-478 (EGADEADADSDADSDTEADSDTEADEADEAK) are enriched in acidic residues.

This sequence belongs to the FKBP-type PPIase family. Tig subfamily.

The protein localises to the cytoplasm. The enzyme catalyses [protein]-peptidylproline (omega=180) = [protein]-peptidylproline (omega=0). Involved in protein export. Acts as a chaperone by maintaining the newly synthesized protein in an open conformation. Functions as a peptidyl-prolyl cis-trans isomerase. This Mycobacterium sp. (strain KMS) protein is Trigger factor.